The sequence spans 532 residues: CTP synthase (532 aa).

The segment at 1–267 (MAKFIFVTGG…QDIIIEQLQL (267 aa)) is amidoligase domain. Position 13 (Ser-13) interacts with CTP. Position 13 (Ser-13) interacts with UTP. 14 to 19 (GLGKGI) is an ATP binding site. Residue Tyr-54 coordinates L-glutamine. ATP is bound at residue Asp-71. Mg(2+)-binding residues include Asp-71 and Glu-141. CTP is bound by residues 148–150 (DIE), 188–193 (KTKPIQ), and Lys-224. UTP contacts are provided by residues 188–193 (KTKPIQ) and Lys-224. One can recognise a Glutamine amidotransferase type-1 domain in the interval 292–532 (EISFVGKYIE…FIKAIIENNK (241 aa)). Gly-354 lines the L-glutamine pocket. Residue Cys-381 is the Nucleophile; for glutamine hydrolysis of the active site. Residues 382 to 385 (LGMQ), Glu-405, and Arg-461 each bind L-glutamine. Active-site residues include His-506 and Glu-508.

The protein belongs to the CTP synthase family. Homotetramer.

The catalysed reaction is UTP + L-glutamine + ATP + H2O = CTP + L-glutamate + ADP + phosphate + 2 H(+). The enzyme catalyses L-glutamine + H2O = L-glutamate + NH4(+). It carries out the reaction UTP + NH4(+) + ATP = CTP + ADP + phosphate + 2 H(+). The protein operates within pyrimidine metabolism; CTP biosynthesis via de novo pathway; CTP from UDP: step 2/2. Allosterically activated by GTP, when glutamine is the substrate; GTP has no effect on the reaction when ammonia is the substrate. The allosteric effector GTP functions by stabilizing the protein conformation that binds the tetrahedral intermediate(s) formed during glutamine hydrolysis. Inhibited by the product CTP, via allosteric rather than competitive inhibition. Catalyzes the ATP-dependent amination of UTP to CTP with either L-glutamine or ammonia as the source of nitrogen. Regulates intracellular CTP levels through interactions with the four ribonucleotide triphosphates. The chain is CTP synthase from Mycoplasma capricolum subsp. capricolum (strain California kid / ATCC 27343 / NCTC 10154).